The following is a 120-amino-acid chain: Ribonuclease P protein component 2 (120 aa).

The protein belongs to the eukaryotic/archaeal RNase P protein component 2 family. Consists of a catalytic RNA component and at least 4-5 protein subunits.

The protein localises to the cytoplasm. It catalyses the reaction Endonucleolytic cleavage of RNA, removing 5'-extranucleotides from tRNA precursor.. Its function is as follows. Part of ribonuclease P, a protein complex that generates mature tRNA molecules by cleaving their 5'-ends. The chain is Ribonuclease P protein component 2 from Thermococcus kodakarensis (strain ATCC BAA-918 / JCM 12380 / KOD1) (Pyrococcus kodakaraensis (strain KOD1)).